The primary structure comprises 1168 residues: Protein VARIATION IN COMPOUND TRIGGERED ROOT growth response (1168 aa).

Residues 10–171 (WVYDVFLSFS…EIANDVLAKL (162 aa)) enclose the TIR domain. The active site involves E85. The NB-ARC domain occupies 187-452 (EDHIANMSVL…ACLFNHVKVR (266 aa)). LRR repeat units follow at residues 539 to 562 (TSKV…LFLD), 606 to 629 (LRNL…AMSF), 631 to 653 (CLKE…SKAT), 676 to 699 (LNKL…GFNL), 701 to 720 (SLDY…PEFA), 721 to 744 (TNIS…YFKN), 795 to 820 (LNNL…NLES), 839 to 865 (STNI…FFNL), 873 to 896 (CREL…SFSN), and 1065 to 1089 (NVPL…DWRS).

This sequence belongs to the disease resistance NB-LRR family. Part of a nuclear protein complex made of VICTR, PAD4 and EDS1. Interacts (via TIR domain) with PAD4 and EDS1.

The protein resides in the cytoplasm. Its subcellular location is the nucleus. It carries out the reaction NAD(+) + H2O = ADP-D-ribose + nicotinamide + H(+). Its function is as follows. Disease resistance protein of the TIR-NB-LRR-type. Part of the RPS6 locus that contains a cluster of several paralogous disease resistance (R) genes. Resistance proteins guard the plant against pathogens that contain an appropriate avirulence protein via an indirect interaction with this avirulence protein. That triggers a defense system including the hypersensitive response, which restricts the pathogen growth. Required for [5-(3,4-dichlorophenyl)furan-2-yl]-piperidine-1-ylmethanethione-(DFPM-) induced root growth arrest due to reduced number of meristem cells in the division zone of the primary root and inhibition of abscisic acid- (ABA-) induced stomatal closing. This Arabidopsis thaliana (Mouse-ear cress) protein is Protein VARIATION IN COMPOUND TRIGGERED ROOT growth response (VICTR).